A 230-amino-acid chain; its full sequence is 3,4-dihydroxy-2-butanone 4-phosphate synthase (230 aa).

D-ribulose 5-phosphate contacts are provided by residues 42-43 (RE), Asp-47, 155-159 (RRGHT), and Glu-179. Glu-43 lines the Mg(2+) pocket. His-158 provides a ligand contact to Mg(2+).

Belongs to the DHBP synthase family. In terms of assembly, homodimer. Requires Mg(2+) as cofactor. Mn(2+) is required as a cofactor.

The catalysed reaction is D-ribulose 5-phosphate = (2S)-2-hydroxy-3-oxobutyl phosphate + formate + H(+). It participates in cofactor biosynthesis; riboflavin biosynthesis; 2-hydroxy-3-oxobutyl phosphate from D-ribulose 5-phosphate: step 1/1. Catalyzes the conversion of D-ribulose 5-phosphate to formate and 3,4-dihydroxy-2-butanone 4-phosphate. The chain is 3,4-dihydroxy-2-butanone 4-phosphate synthase from Bordetella bronchiseptica (strain ATCC BAA-588 / NCTC 13252 / RB50) (Alcaligenes bronchisepticus).